A 149-amino-acid chain; its full sequence is D-aminoacyl-tRNA deacylase (149 aa).

The Gly-cisPro motif, important for rejection of L-amino acids signature appears at 138–139 (GP).

It belongs to the DTD family. Homodimer.

It localises to the cytoplasm. It carries out the reaction glycyl-tRNA(Ala) + H2O = tRNA(Ala) + glycine + H(+). The enzyme catalyses a D-aminoacyl-tRNA + H2O = a tRNA + a D-alpha-amino acid + H(+). Its function is as follows. An aminoacyl-tRNA editing enzyme that deacylates mischarged D-aminoacyl-tRNAs. Also deacylates mischarged glycyl-tRNA(Ala), protecting cells against glycine mischarging by AlaRS. Acts via tRNA-based rather than protein-based catalysis; rejects L-amino acids rather than detecting D-amino acids in the active site. By recycling D-aminoacyl-tRNA to D-amino acids and free tRNA molecules, this enzyme counteracts the toxicity associated with the formation of D-aminoacyl-tRNA entities in vivo and helps enforce protein L-homochirality. The protein is D-aminoacyl-tRNA deacylase of Chlorobaculum parvum (strain DSM 263 / NCIMB 8327) (Chlorobium vibrioforme subsp. thiosulfatophilum).